The following is a 431-amino-acid chain: Glutamate--tRNA ligase 1 (431 aa).

Positions 6–16 match the 'HIGH' region motif; sequence PSPTGDMHIGN. Residues 235–239 carry the 'KMSKS' region motif; that stretch reads KMSKR. Lysine 238 contacts ATP.

This sequence belongs to the class-I aminoacyl-tRNA synthetase family. Glutamate--tRNA ligase type 1 subfamily. In terms of assembly, monomer.

It is found in the cytoplasm. The enzyme catalyses tRNA(Glu) + L-glutamate + ATP = L-glutamyl-tRNA(Glu) + AMP + diphosphate. In terms of biological role, catalyzes the attachment of glutamate to tRNA(Glu) in a two-step reaction: glutamate is first activated by ATP to form Glu-AMP and then transferred to the acceptor end of tRNA(Glu). This is Glutamate--tRNA ligase 1 from Campylobacter concisus (strain 13826).